We begin with the raw amino-acid sequence, 136 residues long: Histone H3 (136 aa).

The segment at 1-42 is disordered; the sequence is MARTKQTARKSTGGKAPRKQLATKAAAKSAPATGGVKKPHRY. N6-methylated lysine is present on Lys5. Lys10 bears the N6-acetyllysine; alternate mark. The residue at position 10 (Lys10) is an N6-methylated lysine; alternate. Phosphoserine is present on Ser11. Residues Lys15 and Lys24 each carry the N6-acetyllysine modification. Over residues 22 to 33 the composition is skewed to low complexity; the sequence is ATKAAAKSAPAT. 3 positions are modified to N6-methylated lysine: Lys28, Lys37, and Lys80.

The protein belongs to the histone H3 family. As to quaternary structure, the nucleosome is a histone octamer containing two molecules each of H2A, H2B, H3 and H4 assembled in one H3-H4 heterotetramer and two H2A-H2B heterodimers. The octamer wraps approximately 147 bp of DNA. In terms of processing, acetylation is generally linked to gene activation. Methylation at Lys-5 is linked to gene activation. Methylation at Lys-10 is linked to gene repression.

It is found in the nucleus. It localises to the chromosome. Core component of nucleosome. Nucleosomes wrap and compact DNA into chromatin, limiting DNA accessibility to the cellular machineries which require DNA as a template. Histones thereby play a central role in transcription regulation, DNA repair, DNA replication and chromosomal stability. DNA accessibility is regulated via a complex set of post-translational modifications of histones, also called histone code, and nucleosome remodeling. The chain is Histone H3 from Acropora formosa (Staghorn coral).